Here is a 152-residue protein sequence, read N- to C-terminus: Nucleoside diphosphate kinase (152 aa).

The ATP site is built by lysine 11, phenylalanine 59, arginine 87, threonine 93, arginine 104, and asparagine 114. The Pros-phosphohistidine intermediate role is filled by histidine 117.

This sequence belongs to the NDK family. In terms of assembly, homotetramer. Mg(2+) is required as a cofactor.

It is found in the cytoplasm. It catalyses the reaction a 2'-deoxyribonucleoside 5'-diphosphate + ATP = a 2'-deoxyribonucleoside 5'-triphosphate + ADP. It carries out the reaction a ribonucleoside 5'-diphosphate + ATP = a ribonucleoside 5'-triphosphate + ADP. Major role in the synthesis of nucleoside triphosphates other than ATP. The ATP gamma phosphate is transferred to the NDP beta phosphate via a ping-pong mechanism, using a phosphorylated active-site intermediate. This Prochlorococcus marinus (strain AS9601) protein is Nucleoside diphosphate kinase.